Here is an 83-residue protein sequence, read N- to C-terminus: Mitochondrial import inner membrane translocase subunit Tim8 (83 aa).

The short motif at Cys-35–Cys-60 is the Twin CX3C motif element. 2 cysteine pairs are disulfide-bonded: Cys-35-Cys-60 and Cys-39-Cys-56.

Belongs to the small Tim family. Heterohexamer; composed of 3 copies of ddp-1/tim-8 and 3 copies of tin-13/tim-13, named soluble 70 kDa complex. Associates with the TIM22 complex, whose core is composed of tim-22.

Its subcellular location is the mitochondrion inner membrane. In terms of biological role, mitochondrial intermembrane chaperone that participates in the import and insertion of some multi-pass transmembrane proteins into the mitochondrial inner membrane. Also required for the transfer of beta-barrel precursors from the TOM complex to the sorting and assembly machinery (SAM complex) of the outer membrane. Acts as a chaperone-like protein that protects the hydrophobic precursors from aggregation and guide them through the mitochondrial intermembrane space. The ddp-1/tim-8-tim-13 complex mediates the import of some proteins while the predominant tim-9/tin-9.1-tim-10/tin-10 70 kDa complex mediates the import of much more proteins. This is Mitochondrial import inner membrane translocase subunit Tim8 from Caenorhabditis briggsae.